The chain runs to 213 residues: HTH-type transcriptional regulator SrpR (213 aa).

One can recognise an HTH tetR-type domain in the interval 10–70 (EETRQRIIDA…AVLASRQHPL (61 aa)). The segment at residues 33–52 (TLDQIARKAGVTRGAVYWHF) is a DNA-binding region (H-T-H motif).

In terms of biological role, in conjunction with SrpS represses the srpABC operon. The polypeptide is HTH-type transcriptional regulator SrpR (srpR) (Pseudomonas putida (Arthrobacter siderocapsulatus)).